Consider the following 316-residue polypeptide: Acetyl-coenzyme A carboxylase carboxyl transferase subunit alpha (316 aa).

One can recognise a CoA carboxyltransferase C-terminal domain in the interval Glu35–Asp292.

This sequence belongs to the AccA family. In terms of assembly, acetyl-CoA carboxylase is a heterohexamer composed of biotin carboxyl carrier protein (AccB), biotin carboxylase (AccC) and two subunits each of ACCase subunit alpha (AccA) and ACCase subunit beta (AccD).

Its subcellular location is the cytoplasm. It carries out the reaction N(6)-carboxybiotinyl-L-lysyl-[protein] + acetyl-CoA = N(6)-biotinyl-L-lysyl-[protein] + malonyl-CoA. The protein operates within lipid metabolism; malonyl-CoA biosynthesis; malonyl-CoA from acetyl-CoA: step 1/1. Functionally, component of the acetyl coenzyme A carboxylase (ACC) complex. First, biotin carboxylase catalyzes the carboxylation of biotin on its carrier protein (BCCP) and then the CO(2) group is transferred by the carboxyltransferase to acetyl-CoA to form malonyl-CoA. This is Acetyl-coenzyme A carboxylase carboxyl transferase subunit alpha from Alkaliphilus oremlandii (strain OhILAs) (Clostridium oremlandii (strain OhILAs)).